The primary structure comprises 935 residues: Pre-mRNA-splicing factor CWC22 homolog (935 aa).

The disordered stretch occupies residues methionine 1–glycine 179. Composition is skewed to basic and acidic residues over residues valine 13–serine 25 and glutamate 49–methionine 70. Over residues glutamine 84–valine 148 the composition is skewed to basic residues. The segment covering proline 159–arginine 175 has biased composition (basic and acidic residues). Residues lysine 212–lysine 400 enclose the MIF4G domain. The segment at alanine 463–threonine 489 is disordered. The segment covering isoleucine 465 to glutamate 483 has biased composition (acidic residues). In terms of domain architecture, MI spans alanine 502–methionine 633. The interval lysine 725–histidine 935 is disordered. The segment covering serine 729–aspartate 763 has biased composition (low complexity). Composition is skewed to basic and acidic residues over residues lysine 780–glutamate 891 and aspartate 897–histidine 935.

The protein belongs to the CWC22 family.

Its subcellular location is the nucleus. It localises to the nucleus speckle. Functionally, required for early embryogenesis and tissue differentiation. Required for pre-mRNA splicing and for exon-junction complex (EJC) assembly. Hinders EIF4A3 from non-specifically binding RNA and escorts it to the splicing machinery to promote EJC assembly on mature mRNAs. Through its role in EJC assembly, required for nonsense-mediated mRNA decay. The sequence is that of Pre-mRNA-splicing factor CWC22 homolog from Caenorhabditis briggsae.